The primary structure comprises 307 residues: Methionyl-tRNA formyltransferase (307 aa).

Residue 110 to 113 (SLLP) participates in (6S)-5,6,7,8-tetrahydrofolate binding.

This sequence belongs to the Fmt family.

It carries out the reaction L-methionyl-tRNA(fMet) + (6R)-10-formyltetrahydrofolate = N-formyl-L-methionyl-tRNA(fMet) + (6S)-5,6,7,8-tetrahydrofolate + H(+). Its function is as follows. Attaches a formyl group to the free amino group of methionyl-tRNA(fMet). The formyl group appears to play a dual role in the initiator identity of N-formylmethionyl-tRNA by promoting its recognition by IF2 and preventing the misappropriation of this tRNA by the elongation apparatus. This Chromobacterium violaceum (strain ATCC 12472 / DSM 30191 / JCM 1249 / CCUG 213 / NBRC 12614 / NCIMB 9131 / NCTC 9757 / MK) protein is Methionyl-tRNA formyltransferase.